Here is a 317-residue protein sequence, read N- to C-terminus: L-lactate dehydrogenase (317 aa).

Residues Val-17, Asp-38, Lys-43, Tyr-68, and 82 to 83 each bind NAD(+); that span reads GV. Arg-91 provides a ligand contact to substrate. Residues Ser-104, 121-123, and Ser-146 contribute to the NAD(+) site; that span reads VSN. A substrate-binding site is contributed by 123–126; that stretch reads NPVD. Residue 151–154 coordinates substrate; that stretch reads DTSR. 2 residues coordinate beta-D-fructose 1,6-bisphosphate: Lys-156 and His-171. His-178 functions as the Proton acceptor in the catalytic mechanism. Tyr-224 carries the post-translational modification Phosphotyrosine. Position 233 (Thr-233) interacts with substrate.

This sequence belongs to the LDH/MDH superfamily. LDH family. In terms of assembly, homotetramer.

It localises to the cytoplasm. It catalyses the reaction (S)-lactate + NAD(+) = pyruvate + NADH + H(+). Its pathway is fermentation; pyruvate fermentation to lactate; (S)-lactate from pyruvate: step 1/1. Its activity is regulated as follows. Allosterically activated by fructose 1,6-bisphosphate (FBP). In terms of biological role, catalyzes the conversion of lactate to pyruvate. This chain is L-lactate dehydrogenase, found in Clostridium perfringens (strain SM101 / Type A).